A 179-amino-acid chain; its full sequence is Inosine/xanthosine triphosphatase (179 aa).

Residues 8 to 13 (TTNPAK) and 68 to 69 (EA) each bind substrate. Mg(2+) is bound at residue Glu-68.

The protein belongs to the YjjX NTPase family. Homodimer. The cofactor is Mg(2+). It depends on Mn(2+) as a cofactor.

It catalyses the reaction XTP + H2O = XDP + phosphate + H(+). It carries out the reaction ITP + H2O = IDP + phosphate + H(+). Phosphatase that hydrolyzes non-canonical purine nucleotides such as XTP and ITP to their respective diphosphate derivatives. Probably excludes non-canonical purines from DNA/RNA precursor pool, thus preventing their incorporation into DNA/RNA and avoiding chromosomal lesions. The polypeptide is Inosine/xanthosine triphosphatase (Serratia proteamaculans (strain 568)).